A 129-amino-acid chain; its full sequence is Small ribosomal subunit protein uS12 (129 aa).

Residue Asp89 is modified to 3-methylthioaspartic acid. Residues 101–129 (TLDTSGVSDRKQSRSKYGAKQPKAVAAKK) are disordered.

Belongs to the universal ribosomal protein uS12 family. In terms of assembly, part of the 30S ribosomal subunit. Contacts proteins S8 and S17. May interact with IF1 in the 30S initiation complex.

With S4 and S5 plays an important role in translational accuracy. Its function is as follows. Interacts with and stabilizes bases of the 16S rRNA that are involved in tRNA selection in the A site and with the mRNA backbone. Located at the interface of the 30S and 50S subunits, it traverses the body of the 30S subunit contacting proteins on the other side and probably holding the rRNA structure together. The combined cluster of proteins S8, S12 and S17 appears to hold together the shoulder and platform of the 30S subunit. This is Small ribosomal subunit protein uS12 from Chlorobium luteolum (strain DSM 273 / BCRC 81028 / 2530) (Pelodictyon luteolum).